Consider the following 771-residue polypeptide: DNA polymerase 1 (771 aa).

The protein belongs to the DNA polymerase type-B family.

The catalysed reaction is DNA(n) + a 2'-deoxyribonucleoside 5'-triphosphate = DNA(n+1) + diphosphate. The sequence is that of DNA polymerase 1 (polI) from Pyrococcus abyssi.